Consider the following 244-residue polypeptide: tRNA pseudouridine synthase B (244 aa).

The Nucleophile role is filled by aspartate 46.

Belongs to the pseudouridine synthase TruB family. Type 1 subfamily.

It carries out the reaction uridine(55) in tRNA = pseudouridine(55) in tRNA. In terms of biological role, responsible for synthesis of pseudouridine from uracil-55 in the psi GC loop of transfer RNAs. The chain is tRNA pseudouridine synthase B from Bordetella avium (strain 197N).